Reading from the N-terminus, the 199-residue chain is MFTPPLARLIEQLQRLPGVGPKTAQRLALHILKRPEEEVNTLAKAIVEAKKQVGLCQVCFHLSAESTCEICRNPNRDNQTLCVVADSRDVIALEKTREYQGKYHVLGGVISPMDGIGPEQLNISPLVRRVSQHQIKEVILAISPSVEGETTTLYVGQLLKPFTKVTRIAFGLPMGGDLEYADEVTLARALEGRRELDYN.

A C4-type zinc finger spans residues 56 to 71 (CQVCFHLSAESTCEIC). In terms of domain architecture, Toprim spans 79–173 (QTLCVVADSR…KVTRIAFGLP (95 aa)).

This sequence belongs to the RecR family.

In terms of biological role, may play a role in DNA repair. It seems to be involved in an RecBC-independent recombinational process of DNA repair. It may act with RecF and RecO. This Gloeothece citriformis (strain PCC 7424) (Cyanothece sp. (strain PCC 7424)) protein is Recombination protein RecR.